Consider the following 111-residue polypeptide: MAEFKHVFVCVQDRPPGHPQGSCAQRGSREVFQAFMEKIQTDPQLFMTTVITPTGCMNACMMGPVVVVYPDGVWYGQVKPEDVDEIVEKHLKGGEPVERLVISKGKPPGMF.

Residues cysteine 10, cysteine 23, cysteine 56, and cysteine 60 each contribute to the [2Fe-2S] cluster site.

Homodimer in solution. [2Fe-2S] cluster is required as a cofactor.

Its function is as follows. Ferredoxins are iron-sulfur proteins that transfer electrons in a wide variety of metabolic reactions. The sequence is that of Ferredoxin, 2Fe-2S (fdx4) from Aquifex aeolicus (strain VF5).